Reading from the N-terminus, the 528-residue chain is ATP synthase subunit alpha 1 (528 aa).

Gly177 to Thr184 contacts ATP.

The protein belongs to the ATPase alpha/beta chains family. In terms of assembly, F-type ATPases have 2 components, CF(1) - the catalytic core - and CF(0) - the membrane proton channel. CF(1) has five subunits: alpha(3), beta(3), gamma(1), delta(1), epsilon(1). CF(0) has three main subunits: a(1), b(2) and c(9-12). The alpha and beta chains form an alternating ring which encloses part of the gamma chain. CF(1) is attached to CF(0) by a central stalk formed by the gamma and epsilon chains, while a peripheral stalk is formed by the delta and b chains.

The protein localises to the cell inner membrane. The catalysed reaction is ATP + H2O + 4 H(+)(in) = ADP + phosphate + 5 H(+)(out). Produces ATP from ADP in the presence of a proton gradient across the membrane. The alpha chain is a regulatory subunit. This Pseudoalteromonas atlantica (strain T6c / ATCC BAA-1087) protein is ATP synthase subunit alpha 1.